The following is a 437-amino-acid chain: Protein WVD2-like 5 (437 aa).

3 disordered regions span residues 1-22, 38-210, and 254-437; these read MDPE…GGLA, TVDT…FSFK, and LRKS…AVEH. Low complexity predominate over residues 41-55; the sequence is TTSESQNENSANSST. The segment covering 58-86 has biased composition (basic and acidic residues); the sequence is TIEHVKEAAEGTQVEHVDDSKCMKGEKAQ. The span at 121–140 shows a compositional bias: polar residues; it reads SNGSVAPNVQTTNPLKSKSF. A compositionally biased stretch (basic and acidic residues) spans 151 to 167; it reads GKHDSAPAESADGEKVK. Residue Ser208 is modified to Phosphoserine. Residues 288-297 are compositionally biased toward basic residues; sequence KSPKLGRKKT. Low complexity predominate over residues 360 to 371; sequence PAPAKAAIIPAK. Residues 408 to 437 are compositionally biased toward basic and acidic residues; that stretch reads EDSHETVSPRMNEDRADKSIEVSEAVAVEH. Residue Ser415 is modified to Phosphoserine.

The protein belongs to the TPX2 family. Expressed in seedlings.

Its subcellular location is the cytoplasm. It localises to the cytoskeleton. In terms of biological role, microtubule-associated protein (MAP) that regulates the orientation of interphase cortical microtubules. The protein is Protein WVD2-like 5 of Arabidopsis thaliana (Mouse-ear cress).